A 274-amino-acid chain; its full sequence is Nitrogenase iron protein (274 aa).

8–15 (GKGGIGKS) contributes to the ATP binding site. [4Fe-4S] cluster is bound at residue C94. R97 bears the ADP-ribosylarginine; by dinitrogenase reductase ADP-ribosyltransferase mark. Position 131 (C131) interacts with [4Fe-4S] cluster.

This sequence belongs to the NifH/BchL/ChlL family. Homodimer. [4Fe-4S] cluster serves as cofactor. In terms of processing, the reversible ADP-ribosylation of Arg-97 inactivates the nitrogenase reductase and regulates nitrogenase activity.

The catalysed reaction is N2 + 8 reduced [2Fe-2S]-[ferredoxin] + 16 ATP + 16 H2O = H2 + 8 oxidized [2Fe-2S]-[ferredoxin] + 2 NH4(+) + 16 ADP + 16 phosphate + 6 H(+). Its function is as follows. The key enzymatic reactions in nitrogen fixation are catalyzed by the nitrogenase complex, which has 2 components: the iron protein and the molybdenum-iron protein. This is Nitrogenase iron protein from Azobacteroides pseudotrichonymphae genomovar. CFP2.